A 111-amino-acid chain; its full sequence is Ribonuclease P protein component (111 aa).

The protein belongs to the RnpA family. As to quaternary structure, consists of a catalytic RNA component (M1 or rnpB) and a protein subunit.

It catalyses the reaction Endonucleolytic cleavage of RNA, removing 5'-extranucleotides from tRNA precursor.. In terms of biological role, RNaseP catalyzes the removal of the 5'-leader sequence from pre-tRNA to produce the mature 5'-terminus. It can also cleave other RNA substrates such as 4.5S RNA. The protein component plays an auxiliary but essential role in vivo by binding to the 5'-leader sequence and broadening the substrate specificity of the ribozyme. In Fusobacterium nucleatum subsp. nucleatum (strain ATCC 25586 / DSM 15643 / BCRC 10681 / CIP 101130 / JCM 8532 / KCTC 2640 / LMG 13131 / VPI 4355), this protein is Ribonuclease P protein component.